The following is a 156-amino-acid chain: E3 ubiquitin-protein ligase RNF181 (156 aa).

The RING-type; atypical zinc finger occupies 79–120; it reads CPVCLLEFEEGETVRQLPCEHLFHSACILPWLGKTNSCPLCR.

Belongs to the RNF181 family.

It catalyses the reaction S-ubiquitinyl-[E2 ubiquitin-conjugating enzyme]-L-cysteine + [acceptor protein]-L-lysine = [E2 ubiquitin-conjugating enzyme]-L-cysteine + N(6)-ubiquitinyl-[acceptor protein]-L-lysine.. The protein operates within protein modification; protein ubiquitination. E3 ubiquitin-protein ligase which accepts ubiquitin from an E2 ubiquitin-conjugating enzyme in the form of a thioester and then directly transfers the ubiquitin to targeted substrates. Catalyzes monoubiquitination of 26S proteasome subunit PSMC2/RPT1. The polypeptide is E3 ubiquitin-protein ligase RNF181 (rnf181) (Xenopus laevis (African clawed frog)).